Reading from the N-terminus, the 498-residue chain is MKKCWFHSMLSNVELEYRCRLSKSMDNLGPLENTSVSEDPILNDTEKNTYNWSHSDSSNVDHLVGVRDIRNLNVDDTFLVLGRDNKKDGYSIYFDIENQVFGIDNNHSFLSELEKEFSSYWNSSYLNKGSRSDDSHYDYSMYDNKYSWNNYINSCIDSYLRSQIGIASSILSGSENCSESYISTYILGESRNSSETGNSRLRTSTNGSDFALKENSNDLGVTQKYKHLWVQCEICYGLNYKKFFKSKMNICEQCGYHLKMSSSDRIELSIDPGTWDPMDEEMFSLDPIDFHSEEEPYKDRIDSYQKKTGLTEAIQTGIGQLNGIPVAIGVMDFQFMGGSMGSVVGEKITRLIEYATNQFLPLILVCASGGARMQEGSLSLMQMAKISSALYDYQSNKKLVYVSILTSPTTGGVTASFGMLGDIIIAEPNAYIAFAGKRVIEQTLNKTVPEGSQAAEFLFHKGLFDPIVPRNLLKGVLSELFQLHAFFPLNHNLSRTLT.

The CoA carboxyltransferase N-terminal domain occupies 228-498 (LWVQCEICYG…LNHNLSRTLT (271 aa)). Residues Cys-232, Cys-235, Cys-251, and Cys-254 each contribute to the Zn(2+) site. The C4-type zinc-finger motif lies at 232-254 (CEICYGLNYKKFFKSKMNICEQC).

The protein belongs to the AccD/PCCB family. In terms of assembly, acetyl-CoA carboxylase is a heterohexamer composed of biotin carboxyl carrier protein, biotin carboxylase and 2 subunits each of ACCase subunit alpha and ACCase plastid-coded subunit beta (accD). It depends on Zn(2+) as a cofactor.

It is found in the plastid. Its subcellular location is the chloroplast stroma. It carries out the reaction N(6)-carboxybiotinyl-L-lysyl-[protein] + acetyl-CoA = N(6)-biotinyl-L-lysyl-[protein] + malonyl-CoA. Its pathway is lipid metabolism; malonyl-CoA biosynthesis; malonyl-CoA from acetyl-CoA: step 1/1. In terms of biological role, component of the acetyl coenzyme A carboxylase (ACC) complex. Biotin carboxylase (BC) catalyzes the carboxylation of biotin on its carrier protein (BCCP) and then the CO(2) group is transferred by the transcarboxylase to acetyl-CoA to form malonyl-CoA. This is Acetyl-coenzyme A carboxylase carboxyl transferase subunit beta, chloroplastic from Populus alba (White poplar).